Reading from the N-terminus, the 578-residue chain is Proline--tRNA ligase (578 aa).

The protein belongs to the class-II aminoacyl-tRNA synthetase family. ProS type 1 subfamily. As to quaternary structure, homodimer.

It localises to the cytoplasm. The catalysed reaction is tRNA(Pro) + L-proline + ATP = L-prolyl-tRNA(Pro) + AMP + diphosphate. In terms of biological role, catalyzes the attachment of proline to tRNA(Pro) in a two-step reaction: proline is first activated by ATP to form Pro-AMP and then transferred to the acceptor end of tRNA(Pro). As ProRS can inadvertently accommodate and process non-cognate amino acids such as alanine and cysteine, to avoid such errors it has two additional distinct editing activities against alanine. One activity is designated as 'pretransfer' editing and involves the tRNA(Pro)-independent hydrolysis of activated Ala-AMP. The other activity is designated 'posttransfer' editing and involves deacylation of mischarged Ala-tRNA(Pro). The misacylated Cys-tRNA(Pro) is not edited by ProRS. The chain is Proline--tRNA ligase from Burkholderia pseudomallei (strain 668).